Here is a 130-residue protein sequence, read N- to C-terminus: S-protein homolog 22 (130 aa).

The signal sequence occupies residues 1–21 (MKYFTIFFIFFSLCMFGHVSG).

It belongs to the plant self-incompatibility (S1) protein family.

It localises to the secreted. The polypeptide is S-protein homolog 22 (Arabidopsis thaliana (Mouse-ear cress)).